The chain runs to 266 residues: Glucosamine-6-phosphate deaminase (266 aa).

Aspartate 72 acts as the Proton acceptor; for enolization step in catalysis. Residue aspartate 141 is the For ring-opening step of the active site. The active-site Proton acceptor; for ring-opening step is the histidine 143. Glutamate 148 acts as the For ring-opening step in catalysis.

Belongs to the glucosamine/galactosamine-6-phosphate isomerase family. NagB subfamily. As to quaternary structure, homohexamer.

The catalysed reaction is alpha-D-glucosamine 6-phosphate + H2O = beta-D-fructose 6-phosphate + NH4(+). It functions in the pathway amino-sugar metabolism; N-acetylneuraminate degradation; D-fructose 6-phosphate from N-acetylneuraminate: step 5/5. Its activity is regulated as follows. Allosterically activated by N-acetylglucosamine 6-phosphate (GlcNAc6P). Catalyzes the reversible isomerization-deamination of glucosamine 6-phosphate (GlcN6P) to form fructose 6-phosphate (Fru6P) and ammonium ion. This is Glucosamine-6-phosphate deaminase from Tolumonas auensis (strain DSM 9187 / NBRC 110442 / TA 4).